A 92-amino-acid polypeptide reads, in one-letter code: Large ribosomal subunit protein uL23c (92 aa).

It belongs to the universal ribosomal protein uL23 family. Part of the 50S ribosomal subunit.

It is found in the plastid. The protein resides in the chloroplast. In terms of biological role, binds to 23S rRNA. The protein is Large ribosomal subunit protein uL23c (rpl23) of Mesostigma viride (Green alga).